Consider the following 386-residue polypeptide: Methylthioribose-1-phosphate isomerase (386 aa).

Residue Asp-261 is the Proton donor of the active site.

The protein belongs to the eIF-2B alpha/beta/delta subunits family. MtnA subfamily.

It is found in the cytoplasm. It localises to the nucleus. It carries out the reaction 5-(methylsulfanyl)-alpha-D-ribose 1-phosphate = 5-(methylsulfanyl)-D-ribulose 1-phosphate. The protein operates within amino-acid biosynthesis; L-methionine biosynthesis via salvage pathway; L-methionine from S-methyl-5-thio-alpha-D-ribose 1-phosphate: step 1/6. Functionally, catalyzes the interconversion of methylthioribose-1-phosphate (MTR-1-P) into methylthioribulose-1-phosphate (MTRu-1-P). This Paracoccidioides brasiliensis (strain Pb03) protein is Methylthioribose-1-phosphate isomerase.